The chain runs to 594 residues: Glutamate decarboxylase 1 (594 aa).

Low complexity predominate over residues 1-13 (MASSTPSSSATSS). Positions 1–23 (MASSTPSSSATSSNAGADPNTTN) are disordered. Ser-78 carries the phosphoserine modification. 190 to 192 (QLS) contributes to the 4-aminobutanoate binding site. At Lys-405 the chain carries N6-(pyridoxal phosphate)lysine. Arg-567 serves as a coordination point for 4-aminobutanoate.

This sequence belongs to the group II decarboxylase family. As to quaternary structure, homodimer. Requires pyridoxal 5'-phosphate as cofactor.

It catalyses the reaction L-glutamate + H(+) = 4-aminobutanoate + CO2. Functionally, catalyzes the synthesis of the inhibitory neurotransmitter gamma-aminobutyric acid (GABA) with pyridoxal 5'-phosphate as cofactor. The polypeptide is Glutamate decarboxylase 1 (GAD1) (Pongo abelii (Sumatran orangutan)).